A 471-amino-acid polypeptide reads, in one-letter code: Eukaryotic translation initiation factor 3 subunit L (471 aa).

The PCI domain maps to 252-446 (DAIRMFSHIL…DLDYAMQGDL (195 aa)).

It belongs to the eIF-3 subunit L family.

It localises to the cytoplasm. In terms of biological role, component of the eukaryotic translation initiation factor 3 (eIF-3) complex, which is involved in protein synthesis of a specialized repertoire of mRNAs and, together with other initiation factors, stimulates binding of mRNA and methionyl-tRNAi to the 40S ribosome. The eIF-3 complex specifically targets and initiates translation of a subset of mRNAs involved in cell proliferation. This Pyricularia oryzae (strain Y34) (Rice blast fungus) protein is Eukaryotic translation initiation factor 3 subunit L.